A 244-amino-acid chain; its full sequence is Phosphoadenosine 5'-phosphosulfate reductase (244 aa).

Cys-239 functions as the Nucleophile; cysteine thiosulfonate intermediate in the catalytic mechanism.

The protein belongs to the PAPS reductase family. CysH subfamily.

It is found in the cytoplasm. The enzyme catalyses [thioredoxin]-disulfide + sulfite + adenosine 3',5'-bisphosphate + 2 H(+) = [thioredoxin]-dithiol + 3'-phosphoadenylyl sulfate. Its pathway is sulfur metabolism; hydrogen sulfide biosynthesis; sulfite from sulfate: step 3/3. Functionally, catalyzes the formation of sulfite from phosphoadenosine 5'-phosphosulfate (PAPS) using thioredoxin as an electron donor. The sequence is that of Phosphoadenosine 5'-phosphosulfate reductase from Pectobacterium atrosepticum (strain SCRI 1043 / ATCC BAA-672) (Erwinia carotovora subsp. atroseptica).